A 111-amino-acid polypeptide reads, in one-letter code: Probable U2 small nuclear ribonucleoprotein B'' (111 aa).

One can recognise an RRM domain in the interval 4 to 83; it reads NTLYVNNLND…KEMKIQYAHS (80 aa).

Belongs to the 40S cdc5-associated complex (or cwf complex), a spliceosome sub-complex reminiscent of a late-stage spliceosome composed of the U2, U5 and U6 snRNAs and at least brr2, cdc5, cwf2/prp3, cwf3/syf1, cwf4/syf3, cwf5/ecm2, spp42/cwf6, cwf7/spf27, cwf8, cwf9, cwf10, cwf11, cwf12, prp45/cwf13, cwf14, cwf15, cwf16, cwf17, cwf18, cwf19, cwf20, cwf21, cwf22, cwf23, cwf24, cwf25, cwf26, cyp7/cwf27, cwf28, cwf29/ist3, lea1, msl1, prp5/cwf1, prp10, prp12/sap130, prp17, prp22, sap61, sap62, sap114, sap145, slu7, smb1, smd1, smd3, smf1, smg1 and syf2.

It localises to the nucleus. Its function is as follows. Involved in pre-mRNA splicing. This protein is associated with snRNP U2. It binds stem loop IV of U2 snRNA. The protein is Probable U2 small nuclear ribonucleoprotein B'' (msl1) of Schizosaccharomyces pombe (strain 972 / ATCC 24843) (Fission yeast).